Consider the following 640-residue polypeptide: Protection of telomeres protein 1 (640 aa).

The protein belongs to the telombin family. In terms of assembly, homodimer or homooligomer. Component of the shelterin complex (telosome) composed of TERF1, TERF2, TINF2, TERF2IP, ACD and POT1. Binds single-stranded telomeric DNA as a monomer. Associated component of the telomerase holoenzyme complex. Found in a complex with TERF1, TINF2 and TNKS1. Interacts with TNKS1. Forms heterodimers with ACD. Identified in a complex with ACD and single-stranded telomeric DNA.

It localises to the nucleus. It is found in the chromosome. The protein resides in the telomere. Its function is as follows. Component of the telomerase ribonucleoprotein (RNP) complex that is essential for the replication of chromosome termini. Is a component of the double-stranded telomeric DNA-binding TRF1 complex which is involved in the regulation of telomere length by cis-inhibition of telomerase. Also acts as a single-stranded telomeric DNA-binding protein and thus may act as a downstream effector of the TRF1 complex and may transduce information about telomere maintenance and/or length to the telomere terminus. Component of the shelterin complex (telosome) that is involved in the regulation of telomere length and protection. Shelterin associates with arrays of double-stranded TTAGGG repeats added by telomerase and protects chromosome ends; without its protective activity, telomeres are no longer hidden from the DNA damage surveillance and chromosome ends are inappropriately processed by DNA repair pathways. Binds to two or more telomeric single-stranded 5'-TTAGGG-3' repeats (G-strand) and with high specificity to a minimal telomeric single-stranded 5'-TAGGGTTAG-3' sequence. Binds telomeric single-stranded sequences internally or at proximity of a 3'-end. Its activity is TERT dependent but it does not increase TERT activity. This is Protection of telomeres protein 1 (Pot1) from Mus musculus (Mouse).